We begin with the raw amino-acid sequence, 492 residues long: Catalase (492 aa).

Residues His65 and Asn138 contribute to the active site. Tyr348 is a heme binding site.

The protein belongs to the catalase family. As to quaternary structure, homotetramer. The cofactor is heme. In stems, leaves, roots and developing fruits.

It localises to the cytoplasm. Its subcellular location is the cytosol. The protein resides in the peroxisome matrix. It carries out the reaction 2 H2O2 = O2 + 2 H2O. Catalyzes the degradation of hydrogen peroxide (H(2)O(2)) generated by peroxisomal oxidases to water and oxygen, thereby protecting cells from the toxic effects of hydrogen peroxide. The protein is Catalase (CAT) of Capsicum annuum (Capsicum pepper).